Consider the following 105-residue polypeptide: Small ribosomal subunit protein uS10 (105 aa).

Belongs to the universal ribosomal protein uS10 family. As to quaternary structure, part of the 30S ribosomal subunit.

Functionally, involved in the binding of tRNA to the ribosomes. This chain is Small ribosomal subunit protein uS10, found in Rickettsia felis (strain ATCC VR-1525 / URRWXCal2) (Rickettsia azadi).